Here is a 31-residue protein sequence, read N- to C-terminus: Cytochrome b6-f complex subunit 6 (31 aa).

A helical transmembrane segment spans residues 3–23 (TITSYFGFLLAVLTITSGLFI).

It belongs to the PetL family. The 4 large subunits of the cytochrome b6-f complex are cytochrome b6, subunit IV (17 kDa polypeptide, PetD), cytochrome f and the Rieske protein, while the 4 small subunits are PetG, PetL, PetM and PetN. The complex functions as a dimer.

It localises to the plastid. It is found in the chloroplast thylakoid membrane. In terms of biological role, component of the cytochrome b6-f complex, which mediates electron transfer between photosystem II (PSII) and photosystem I (PSI), cyclic electron flow around PSI, and state transitions. PetL is important for photoautotrophic growth as well as for electron transfer efficiency and stability of the cytochrome b6-f complex. In Lotus japonicus (Lotus corniculatus var. japonicus), this protein is Cytochrome b6-f complex subunit 6.